The following is a 438-amino-acid chain: Trigger factor (438 aa).

One can recognise a PPIase FKBP-type domain in the interval 163–249 (EDFVLIDYEG…LKEIRKQILP (87 aa)).

This sequence belongs to the FKBP-type PPIase family. Tig subfamily.

The protein localises to the cytoplasm. The catalysed reaction is [protein]-peptidylproline (omega=180) = [protein]-peptidylproline (omega=0). In terms of biological role, involved in protein export. Acts as a chaperone by maintaining the newly synthesized protein in an open conformation. Functions as a peptidyl-prolyl cis-trans isomerase. This is Trigger factor from Desulfatibacillum aliphaticivorans.